Consider the following 201-residue polypeptide: Holliday junction branch migration complex subunit RuvA (201 aa).

Positions M1–A64 are domain I. The interval E65–P143 is domain II. The tract at residues L144–A152 is flexible linker. The segment at T153–V201 is domain III.

This sequence belongs to the RuvA family. Homotetramer. Forms an RuvA(8)-RuvB(12)-Holliday junction (HJ) complex. HJ DNA is sandwiched between 2 RuvA tetramers; dsDNA enters through RuvA and exits via RuvB. An RuvB hexamer assembles on each DNA strand where it exits the tetramer. Each RuvB hexamer is contacted by two RuvA subunits (via domain III) on 2 adjacent RuvB subunits; this complex drives branch migration. In the full resolvosome a probable DNA-RuvA(4)-RuvB(12)-RuvC(2) complex forms which resolves the HJ.

It localises to the cytoplasm. The RuvA-RuvB-RuvC complex processes Holliday junction (HJ) DNA during genetic recombination and DNA repair, while the RuvA-RuvB complex plays an important role in the rescue of blocked DNA replication forks via replication fork reversal (RFR). RuvA specifically binds to HJ cruciform DNA, conferring on it an open structure. The RuvB hexamer acts as an ATP-dependent pump, pulling dsDNA into and through the RuvAB complex. HJ branch migration allows RuvC to scan DNA until it finds its consensus sequence, where it cleaves and resolves the cruciform DNA. In Pseudomonas aeruginosa (strain LESB58), this protein is Holliday junction branch migration complex subunit RuvA.